A 546-amino-acid chain; its full sequence is RuBisCO large subunit-binding protein subunit alpha, chloroplastic (546 aa).

Residues 1-6 constitute a chloroplast transit peptide; sequence RFSVRA. The residue at position 50 (Ser-50) is a Phosphoserine.

The protein belongs to the chaperonin (HSP60) family. In terms of assembly, oligomer of probably six alpha and six beta subunits.

It is found in the plastid. The protein localises to the chloroplast. Functionally, this protein binds RuBisCO small and large subunits and is implicated in the assembly of the enzyme oligomer. The sequence is that of RuBisCO large subunit-binding protein subunit alpha, chloroplastic from Brassica napus (Rape).